We begin with the raw amino-acid sequence, 397 residues long: Subtilisin-like protease 3 (397 aa).

Residues 1 to 19 (MGCIKVISVFLAAIAAVDA) form the signal peptide. Positions 20–116 (RAFFHNRGGS…VEHDRVVKLA (97 aa)) are excised as a propeptide. Positions 35–116 (SYIVVMKDGV…VEHDRVVKLA (82 aa)) constitute an Inhibitor I9 domain. The region spanning 126-397 (TWGLGRVSHR…NRLLYNGSGQ (272 aa)) is the Peptidase S8 domain. Catalysis depends on charge relay system residues Asp-158 and His-189. A glycan (N-linked (GlcNAc...) asparagine) is linked at Asn-250. Ser-344 functions as the Charge relay system in the catalytic mechanism. N-linked (GlcNAc...) asparagine glycosylation is present at Asn-393.

Belongs to the peptidase S8 family.

The protein resides in the secreted. In terms of biological role, secreted subtilisin-like serine protease with keratinolytic activity that contributes to pathogenicity. In Trichophyton tonsurans (Scalp ringworm fungus), this protein is Subtilisin-like protease 3 (SUB3).